The primary structure comprises 339 residues: Lipoyl synthase (339 aa).

A disordered region spans residues 13–35 (RPKLDAPARPRHPEKAHRPDTAI). Cys68, Cys73, Cys79, Cys94, Cys98, Cys101, and Ser307 together coordinate [4Fe-4S] cluster. The Radical SAM core domain occupies 80–296 (WEKRHATFMI…ETTAYAKGFL (217 aa)).

It belongs to the radical SAM superfamily. Lipoyl synthase family. It depends on [4Fe-4S] cluster as a cofactor.

The protein localises to the cytoplasm. It carries out the reaction [[Fe-S] cluster scaffold protein carrying a second [4Fe-4S](2+) cluster] + N(6)-octanoyl-L-lysyl-[protein] + 2 oxidized [2Fe-2S]-[ferredoxin] + 2 S-adenosyl-L-methionine + 4 H(+) = [[Fe-S] cluster scaffold protein] + N(6)-[(R)-dihydrolipoyl]-L-lysyl-[protein] + 4 Fe(3+) + 2 hydrogen sulfide + 2 5'-deoxyadenosine + 2 L-methionine + 2 reduced [2Fe-2S]-[ferredoxin]. The protein operates within protein modification; protein lipoylation via endogenous pathway; protein N(6)-(lipoyl)lysine from octanoyl-[acyl-carrier-protein]: step 2/2. Catalyzes the radical-mediated insertion of two sulfur atoms into the C-6 and C-8 positions of the octanoyl moiety bound to the lipoyl domains of lipoate-dependent enzymes, thereby converting the octanoylated domains into lipoylated derivatives. This chain is Lipoyl synthase, found in Methylorubrum extorquens (strain CM4 / NCIMB 13688) (Methylobacterium extorquens).